Here is a 434-residue protein sequence, read N- to C-terminus: Asparagine--tRNA ligase (434 aa).

It belongs to the class-II aminoacyl-tRNA synthetase family.

It is found in the cytoplasm. It catalyses the reaction tRNA(Asn) + L-asparagine + ATP = L-asparaginyl-tRNA(Asn) + AMP + diphosphate + H(+). This Pyrococcus furiosus (strain ATCC 43587 / DSM 3638 / JCM 8422 / Vc1) protein is Asparagine--tRNA ligase (asnS).